A 337-amino-acid chain; its full sequence is Holliday junction branch migration complex subunit RuvB (337 aa).

Positions 1–179 (MTHQVSVLHQ…FSFSGRVSYY (179 aa)) are large ATPase domain (RuvB-L). Residues leucine 18, arginine 19, glycine 60, lysine 63, threonine 64, serine 65, 126–128 (EDY), arginine 169, tyrosine 179, and arginine 216 each bind ATP. A Mg(2+)-binding site is contributed by threonine 64. Residues 180–250 (SDEDLATILK…VAEKALSMLL (71 aa)) form a small ATPAse domain (RuvB-S) region. The interval 253–337 (DWGLNEIDIK…DNLQILGEEK (85 aa)) is head domain (RuvB-H). DNA is bound by residues lysine 308 and arginine 313.

This sequence belongs to the RuvB family. In terms of assembly, homohexamer. Forms an RuvA(8)-RuvB(12)-Holliday junction (HJ) complex. HJ DNA is sandwiched between 2 RuvA tetramers; dsDNA enters through RuvA and exits via RuvB. An RuvB hexamer assembles on each DNA strand where it exits the tetramer. Each RuvB hexamer is contacted by two RuvA subunits (via domain III) on 2 adjacent RuvB subunits; this complex drives branch migration. In the full resolvosome a probable DNA-RuvA(4)-RuvB(12)-RuvC(2) complex forms which resolves the HJ.

It is found in the cytoplasm. The enzyme catalyses ATP + H2O = ADP + phosphate + H(+). In terms of biological role, the RuvA-RuvB-RuvC complex processes Holliday junction (HJ) DNA during genetic recombination and DNA repair, while the RuvA-RuvB complex plays an important role in the rescue of blocked DNA replication forks via replication fork reversal (RFR). RuvA specifically binds to HJ cruciform DNA, conferring on it an open structure. The RuvB hexamer acts as an ATP-dependent pump, pulling dsDNA into and through the RuvAB complex. RuvB forms 2 homohexamers on either side of HJ DNA bound by 1 or 2 RuvA tetramers; 4 subunits per hexamer contact DNA at a time. Coordinated motions by a converter formed by DNA-disengaged RuvB subunits stimulates ATP hydrolysis and nucleotide exchange. Immobilization of the converter enables RuvB to convert the ATP-contained energy into a lever motion, pulling 2 nucleotides of DNA out of the RuvA tetramer per ATP hydrolyzed, thus driving DNA branch migration. The RuvB motors rotate together with the DNA substrate, which together with the progressing nucleotide cycle form the mechanistic basis for DNA recombination by continuous HJ branch migration. Branch migration allows RuvC to scan DNA until it finds its consensus sequence, where it cleaves and resolves cruciform DNA. The polypeptide is Holliday junction branch migration complex subunit RuvB (Chlamydia felis (strain Fe/C-56) (Chlamydophila felis)).